We begin with the raw amino-acid sequence, 111 residues long: Universal stress protein B (111 aa).

The next 2 membrane-spanning stretches (helical) occupy residues 1 to 21 and 90 to 110; these read MIST…NMAR and FILT…LLIW.

It belongs to the universal stress protein B family.

It localises to the cell inner membrane. This chain is Universal stress protein B, found in Enterobacter sp. (strain 638).